The sequence spans 349 residues: Isopentenyl-diphosphate delta-isomerase (349 aa).

7–8 (RK) contacts substrate. Residues serine 65, 66–68 (SMT), serine 96, and asparagine 124 each bind FMN. Substrate is bound at residue 96 to 98 (SQR). A substrate-binding site is contributed by glutamine 159. Mg(2+) is bound at residue glutamate 160. Residues lysine 191, threonine 221, 271-273 (GIR), and 292-293 (AA) each bind FMN.

The protein belongs to the IPP isomerase type 2 family. In terms of assembly, homooctamer. Dimer of tetramers. Requires FMN as cofactor. The cofactor is NADPH. Mg(2+) is required as a cofactor.

It localises to the cytoplasm. It carries out the reaction isopentenyl diphosphate = dimethylallyl diphosphate. Functionally, involved in the biosynthesis of isoprenoids. Catalyzes the 1,3-allylic rearrangement of the homoallylic substrate isopentenyl (IPP) to its allylic isomer, dimethylallyl diphosphate (DMAPP). The polypeptide is Isopentenyl-diphosphate delta-isomerase (Synechocystis sp. (strain ATCC 27184 / PCC 6803 / Kazusa)).